The sequence spans 252 residues: 5'-nucleotidase SurE (252 aa).

A divalent metal cation contacts are provided by aspartate 8, aspartate 9, serine 39, and asparagine 96.

It belongs to the SurE nucleotidase family. A divalent metal cation is required as a cofactor.

The protein resides in the cytoplasm. It catalyses the reaction a ribonucleoside 5'-phosphate + H2O = a ribonucleoside + phosphate. Nucleotidase that shows phosphatase activity on nucleoside 5'-monophosphates. The sequence is that of 5'-nucleotidase SurE from Petrotoga mobilis (strain DSM 10674 / SJ95).